The chain runs to 158 residues: Cyclic pyranopterin monophosphate synthase (158 aa).

Substrate contacts are provided by residues 75–77 (LCH) and 111–112 (ME). D126 is a catalytic residue.

The protein belongs to the MoaC family. In terms of assembly, homohexamer; trimer of dimers.

It carries out the reaction (8S)-3',8-cyclo-7,8-dihydroguanosine 5'-triphosphate = cyclic pyranopterin phosphate + diphosphate. It functions in the pathway cofactor biosynthesis; molybdopterin biosynthesis. In terms of biological role, catalyzes the conversion of (8S)-3',8-cyclo-7,8-dihydroguanosine 5'-triphosphate to cyclic pyranopterin monophosphate (cPMP). This Caulobacter vibrioides (strain ATCC 19089 / CIP 103742 / CB 15) (Caulobacter crescentus) protein is Cyclic pyranopterin monophosphate synthase.